Reading from the N-terminus, the 973-residue chain is Splicing regulator ARVCF (973 aa).

The interval 95–123 (VTVEEDPGTPTSHVSIVTSEDGTTRRTET) is disordered. A phosphothreonine mark is found at Thr103 and Thr105. Over residues 103-115 (TPTSHVSIVTSED) the composition is skewed to polar residues. Arg171 is subject to Omega-N-methylarginine. 2 disordered regions span residues 233-254 (RREA…LPEH) and 267-331 (RSLA…QPER). Ser268 bears the Phosphoserine mark. Residues 271–281 (ADDEGGPDLEP) are compositionally biased toward acidic residues. Residues 289-303 (RRPEYGRGLRARALE) are compositionally biased toward basic and acidic residues. Phosphoserine is present on residues Ser333, Ser336, Ser344, and Ser346. 6 ARM repeats span residues 349 to 388 (STRK…HLCF), 391 to 430 (EGIK…NLSY), 434 to 468 (ADNK…VTGT), 469 to 509 (LWNL…NEDS), 527 to 566 (LRNV…DTDN), and 576 to 623 (MRNL…GKKA). Positions 593 to 623 (YQEVEPGIPGSAATSQRRRKDDASCFGGKKA) are disordered. The residue at position 607 (Ser607) is a Phosphoserine. Positions 608–624 (QRRRKDDASCFGGKKAK) match the Nuclear localization signal motif. At Thr637 the chain carries Phosphothreonine. ARM repeat units lie at residues 641–681 (PKRT…AAGA), 694–733 (TYIR…NLSL), 734–776 (DQRN…AVLN), and 777–821 (TIHE…SHVL). Positions 771 to 955 (VVAVLNTIHE…VLGPGAPPFC (185 aa)) are required for interaction with RNA-binding proteins DDX5, HNRNPH2 and SRSF1 and with mRNAs. Residues 844 to 926 (FQSASTAKGP…KELLKGPGPA (83 aa)) form a disordered region. Ser865 carries the post-translational modification Phosphoserine. At Thr866 the chain carries Phosphothreonine. Basic and acidic residues predominate over residues 872–881 (KNLDGEKSTT).

Belongs to the beta-catenin family. As to quaternary structure, component of a ribonucleoprotein complex containing mRNAs and RNA-binding proteins including DDX5, HNRNPH2 and SRSF1 as well as ARVCF. Interacts (via the extreme C-terminus) with FRMPD2 (via the PDZ 2 domain). Interacts with CCDC85B. As to expression, expressed in optic nerve sheath envelope (at protein level). Expressed in heart (at protein level).

It localises to the cell junction. Its subcellular location is the adherens junction. The protein resides in the nucleus. It is found in the cytoplasm. Functionally, contributes to the regulation of alternative splicing of pre-mRNAs. The sequence is that of Splicing regulator ARVCF from Rattus norvegicus (Rat).